The following is a 269-amino-acid chain: Thiazole synthase (269 aa).

Lysine 109 functions as the Schiff-base intermediate with DXP in the catalytic mechanism. Residues glycine 170, 196–197 (AG), and 218–219 (NT) each bind 1-deoxy-D-xylulose 5-phosphate.

This sequence belongs to the ThiG family. Homotetramer. Forms heterodimers with either ThiH or ThiS.

The protein localises to the plastid. It is found in the chloroplast. The enzyme catalyses [ThiS sulfur-carrier protein]-C-terminal-Gly-aminoethanethioate + 2-iminoacetate + 1-deoxy-D-xylulose 5-phosphate = [ThiS sulfur-carrier protein]-C-terminal Gly-Gly + 2-[(2R,5Z)-2-carboxy-4-methylthiazol-5(2H)-ylidene]ethyl phosphate + 2 H2O + H(+). The protein operates within cofactor biosynthesis; thiamine diphosphate biosynthesis. Its function is as follows. Catalyzes the rearrangement of 1-deoxy-D-xylulose 5-phosphate (DXP) to produce the thiazole phosphate moiety of thiamine. Sulfur is provided by the thiocarboxylate moiety of the carrier protein ThiS. In vitro, sulfur can be provided by H(2)S. The chain is Thiazole synthase from Phaeodactylum tricornutum (strain CCAP 1055/1).